The primary structure comprises 187 residues: KS71A fimbrillin (187 aa).

The signal sequence occupies residues 1–21 (MIKSVIAGAVAMAVVSFGANA). Cysteine 43 and cysteine 82 are oxidised to a cystine.

The protein belongs to the fimbrial protein family.

The protein localises to the fimbrium. In terms of biological role, fimbriae (also called pili), polar filaments radiating from the surface of the bacterium to a length of 0.5-1.5 micrometers and numbering 100-300 per cell, enable bacteria to colonize the epithelium of specific host organs. The protein is KS71A fimbrillin (KS71A) of Escherichia coli.